A 354-amino-acid chain; its full sequence is Sulfate/thiosulfate import ATP-binding protein CysA (354 aa).

In terms of domain architecture, ABC transporter spans isoleucine 3 to leucine 237. Glycine 35–threonine 42 contacts ATP.

It belongs to the ABC transporter superfamily. Sulfate/tungstate importer (TC 3.A.1.6) family. In terms of assembly, the complex is composed of two ATP-binding proteins (CysA), two transmembrane proteins (CysT and CysW) and a solute-binding protein (CysP).

It is found in the cell inner membrane. It catalyses the reaction sulfate(out) + ATP + H2O = sulfate(in) + ADP + phosphate + H(+). It carries out the reaction thiosulfate(out) + ATP + H2O = thiosulfate(in) + ADP + phosphate + H(+). Functionally, part of the ABC transporter complex CysAWTP involved in sulfate/thiosulfate import. Responsible for energy coupling to the transport system. The polypeptide is Sulfate/thiosulfate import ATP-binding protein CysA (Bordetella pertussis (strain Tohama I / ATCC BAA-589 / NCTC 13251)).